The chain runs to 119 residues: Large ribosomal subunit protein bL20 (119 aa).

This sequence belongs to the bacterial ribosomal protein bL20 family.

Its function is as follows. Binds directly to 23S ribosomal RNA and is necessary for the in vitro assembly process of the 50S ribosomal subunit. It is not involved in the protein synthesizing functions of that subunit. This chain is Large ribosomal subunit protein bL20, found in Erythrobacter litoralis (strain HTCC2594).